A 195-amino-acid chain; its full sequence is Cholesin (195 aa).

The tract at residues 1–78 (MAKHKRKGLE…KEEKKRLREA (78 aa)) is disordered. 2 stretches are compositionally biased toward basic and acidic residues: residues 8–18 (GLEGTGKESKR) and 26–39 (ETPR…DKET). 3 positions are modified to phosphoserine: serine 41, serine 48, and serine 52. Residues 53–77 (PEERRVLERKLKKERKKEEKKRLRE) are compositionally biased toward basic and acidic residues. Serine 96 carries the phosphoserine modification.

As to expression, secreted via exosomes, secreted from the instestine, secretion is induced by feeding and cholesterol absorption. Expressed in enterocytes.

The protein resides in the secreted. Functionally, hormone secreted from the intestine in response to cholesterol, where it acts to inhibit cholesterol synthesis in the liver and VLDL secretion,leading to a reduction in circulating cholesterol levels. Acts through binding to its receptor, GPR146. The chain is Cholesin (Chlsn) from Mus musculus (Mouse).